The sequence spans 78 residues: UPF0291 protein Exig_1097 (78 aa).

Positions 57–78 are disordered; it reads EEGTDVTPEKLKQAQEEERNKQ. Basic and acidic residues predominate over residues 63 to 78; sequence TPEKLKQAQEEERNKQ.

It belongs to the UPF0291 family.

The protein resides in the cytoplasm. This chain is UPF0291 protein Exig_1097, found in Exiguobacterium sibiricum (strain DSM 17290 / CCUG 55495 / CIP 109462 / JCM 13490 / 255-15).